The following is a 235-amino-acid chain: Methylosome subunit pICln (235 aa).

Residues 1 to 21 are disordered; that stretch reads MSFLKSFPPPGSAEGLRQQQP. At Ser2 the chain carries N-acetylserine. Phosphoserine is present on residues Ser100, Ser142, Ser191, Ser193, Ser196, and Ser208. Positions 133–157 are disordered; the sequence is LHPDPEDEDSDDYDGEEYDVEAHEQ. Residues 137-151 show a composition bias toward acidic residues; that stretch reads PEDEDSDDYDGEEYD. The interval 195–217 is disordered; it reads SSQYNMAGVRTEDSTRDYEDGME. Over residues 204–213 the composition is skewed to basic and acidic residues; it reads RTEDSTRDYE. Thr221 bears the Phosphothreonine mark.

Belongs to the pICln (TC 1.A.47) family. In terms of assembly, component of the methylosome, a 20S complex containing at least PRMT5/SKB1, WDR77/MEP50 and CLNS1A/pICln. May mediate SNRPD1 and SNRPD3 methylation. Forms a 6S pICln-Sm complex composed of CLNS1A/pICln, SNRPD1, SNRPD2, SNRPE, SNRPF and SNRPG; ring-like structure where CLNS1A/pICln mimics additional Sm proteins and which is unable to assemble into the core snRNP. Interacts with LSM10 and LSM11.

The protein localises to the cytoplasm. It localises to the cytosol. The protein resides in the nucleus. Its subcellular location is the cytoskeleton. Functionally, involved in both the assembly of spliceosomal snRNPs and the methylation of Sm proteins. Chaperone that regulates the assembly of spliceosomal U1, U2, U4 and U5 small nuclear ribonucleoproteins (snRNPs), the building blocks of the spliceosome, and thereby plays an important role in the splicing of cellular pre-mRNAs. Most spliceosomal snRNPs contain a common set of Sm proteins SNRPB, SNRPD1, SNRPD2, SNRPD3, SNRPE, SNRPF and SNRPG that assemble in a heptameric protein ring on the Sm site of the small nuclear RNA to form the core snRNP (Sm core). In the cytosol, the Sm proteins SNRPD1, SNRPD2, SNRPE, SNRPF and SNRPG are trapped in an inactive 6S pICln-Sm complex by the chaperone CLNS1A that controls the assembly of the core snRNP. Dissociation by the SMN complex of CLNS1A from the trapped Sm proteins and their transfer to an SMN-Sm complex triggers the assembly of core snRNPs and their transport to the nucleus. The chain is Methylosome subunit pICln (CLNS1A) from Canis lupus familiaris (Dog).